A 56-amino-acid chain; its full sequence is Secreted virulence factor CLU5a (56 aa).

A signal peptide spans 1 to 18; that stretch reads MKVSLTLLATLCASLASA.

Belongs to the MC69 virulence factor family. As to quaternary structure, homodimer; disulfide-linked. Dimerization can possibly extend to multimerisation.

The protein resides in the secreted. Secreted protein required for appressorial penetration of intact host epidermal cells and for pathogenicit, but not for subsequent biotrophic and necrotrophic colonization of leaves. The sequence is that of Secreted virulence factor CLU5a from Colletotrichum graminicola (strain M1.001 / M2 / FGSC 10212) (Maize anthracnose fungus).